We begin with the raw amino-acid sequence, 675 residues long: Methionine--tRNA ligase (675 aa).

A 'HIGH' region motif is present at residues 15–25 (PYANGSIHLGH). Zn(2+) contacts are provided by cysteine 146, cysteine 149, cysteine 159, and cysteine 162. Residues 332-336 (KMSKS) carry the 'KMSKS' region motif. Lysine 335 is a binding site for ATP. Positions 574–675 (DFAKLDLRIA…AGAKPGMRVK (102 aa)) constitute a tRNA-binding domain.

This sequence belongs to the class-I aminoacyl-tRNA synthetase family. MetG type 1 subfamily. Homodimer. Zn(2+) serves as cofactor.

It is found in the cytoplasm. The catalysed reaction is tRNA(Met) + L-methionine + ATP = L-methionyl-tRNA(Met) + AMP + diphosphate. Functionally, is required not only for elongation of protein synthesis but also for the initiation of all mRNA translation through initiator tRNA(fMet) aminoacylation. The polypeptide is Methionine--tRNA ligase (Tolumonas auensis (strain DSM 9187 / NBRC 110442 / TA 4)).